The sequence spans 884 residues: Alanine--tRNA ligase (884 aa).

Zn(2+) is bound by residues histidine 562, histidine 566, cysteine 674, and histidine 678.

It belongs to the class-II aminoacyl-tRNA synthetase family. The cofactor is Zn(2+).

It is found in the cytoplasm. It carries out the reaction tRNA(Ala) + L-alanine + ATP = L-alanyl-tRNA(Ala) + AMP + diphosphate. Catalyzes the attachment of alanine to tRNA(Ala) in a two-step reaction: alanine is first activated by ATP to form Ala-AMP and then transferred to the acceptor end of tRNA(Ala). Also edits incorrectly charged Ser-tRNA(Ala) and Gly-tRNA(Ala) via its editing domain. This chain is Alanine--tRNA ligase, found in Rhizobium johnstonii (strain DSM 114642 / LMG 32736 / 3841) (Rhizobium leguminosarum bv. viciae).